The following is a 434-amino-acid chain: Enolase (434 aa).

A (2R)-2-phosphoglycerate-binding site is contributed by Gln-165. The active-site Proton donor is the Glu-207. Asp-244, Glu-291, and Asp-318 together coordinate Mg(2+). (2R)-2-phosphoglycerate is bound by residues Lys-343, Arg-372, Ser-373, and Lys-394. Catalysis depends on Lys-343, which acts as the Proton acceptor.

Belongs to the enolase family. The cofactor is Mg(2+).

It localises to the cytoplasm. The protein localises to the secreted. Its subcellular location is the cell surface. The enzyme catalyses (2R)-2-phosphoglycerate = phosphoenolpyruvate + H2O. The protein operates within carbohydrate degradation; glycolysis; pyruvate from D-glyceraldehyde 3-phosphate: step 4/5. Catalyzes the reversible conversion of 2-phosphoglycerate (2-PG) into phosphoenolpyruvate (PEP). It is essential for the degradation of carbohydrates via glycolysis. The sequence is that of Enolase from Staphylococcus epidermidis (strain ATCC 35984 / DSM 28319 / BCRC 17069 / CCUG 31568 / BM 3577 / RP62A).